The primary structure comprises 176 residues: MTNIRKSHPLIKIVNEAFIDLPAPSNISSWWNFGSLLGVCLTMQIMTGLFLAMHYTSDTATAFNSVTHICRDVNYGWLLRYLHANGASMFFICLYLHIGRGLYYGSYTYTETWNVGIILLFAVMATAFMGYVLPWGQMSSWGATVITNLLSAIPYIGTDLVGWIWGGFSVDKATLT.

3 helical membrane-spanning segments follow: residues 33–53 (FGSL…FLAM), 77–98 (WLLR…YLHI), and 113–133 (WNVG…GYVL). Heme b contacts are provided by H83 and H97.

It belongs to the cytochrome b family. In terms of assembly, the cytochrome bc1 complex contains 11 subunits: 3 respiratory subunits (MT-CYB, CYC1 and UQCRFS1), 2 core proteins (UQCRC1 and UQCRC2) and 6 low-molecular weight proteins (UQCRH/QCR6, UQCRB/QCR7, UQCRQ/QCR8, UQCR10/QCR9, UQCR11/QCR10 and a cleavage product of UQCRFS1). This cytochrome bc1 complex then forms a dimer. It depends on heme b as a cofactor.

The protein localises to the mitochondrion inner membrane. Component of the ubiquinol-cytochrome c reductase complex (complex III or cytochrome b-c1 complex) that is part of the mitochondrial respiratory chain. The b-c1 complex mediates electron transfer from ubiquinol to cytochrome c. Contributes to the generation of a proton gradient across the mitochondrial membrane that is then used for ATP synthesis. The chain is Cytochrome b (MT-CYB) from Eumops perotis (Western bonneted bat).